The following is a 597-amino-acid chain: Tubulin polyglutamylase ttll-4 (597 aa).

Residues 1-18 (MSSGYSSAPSVSHTSSEA) show a composition bias toward polar residues. Disordered stretches follow at residues 1-39 (MSSGYSSAPSVSHTSSEADLNRIESYEDGVDEEASDEQR) and 80-107 (SKSKKKKQCPPNITIEKKNGNSSPFLKS). Positions 26–35 (YEDGVDEEAS) are enriched in acidic residues. The TTL domain maps to 134–472 (QSRLTWCHNS…HVPPSFDKLH (339 aa)). ATP-binding positions include K250, 256–257 (RG), 278–281 (QHYI), and 291–293 (KFD). R256 provides a ligand contact to a protein. R317 is a binding site for L-glutamate. 338–339 (TN) lines the ATP pocket. L-glutamate contacts are provided by Y340, S341, and K358. Positions 418, 431, and 433 each coordinate Mg(2+). L-glutamate is bound at residue K449.

It belongs to the tubulin--tyrosine ligase family. Mg(2+) serves as cofactor.

It catalyses the reaction L-glutamyl-[protein] + L-glutamate + ATP = gamma-L-glutamyl-L-glutamyl-[protein] + ADP + phosphate + H(+). Its function is as follows. Monoglutamylase which modifies tubulin, adding a single glutamate on the gamma-carboxyl group of specific glutamate residues of target proteins. Involved in the side-chain initiation step of the polyglutamylation reaction but not in the elongation step. Preferentially modifies beta-tail tubulin over the alpha-tubulin. Involved in side-chain glutamylation of tubulin in sensory cilia. Together with ttll-5 and ttll-11, required for male mating. The chain is Tubulin polyglutamylase ttll-4 (ttll-4) from Caenorhabditis briggsae.